A 447-amino-acid polypeptide reads, in one-letter code: Putative branched-chain amino acid carrier protein SERP0977 (447 aa).

Transmembrane regions (helical) follow at residues 5 to 25 (TWII…LIFP), 40 to 60 (ILAF…VGAL), 74 to 94 (PRFS…LFAI), 114 to 134 (GNLA…YLCL), 143 to 163 (IGSL…IKGF), 193 to 213 (GYLT…VNAI), 229 to 249 (IIAG…LGYI), 290 to 310 (LLGI…IVSV), 317 to 337 (IIPK…SFIL), 350 to 370 (VPVL…ILIA), 382 to 402 (IPLI…QGWI), and 417 to 437 (LEWF…SYFV).

It belongs to the branched chain amino acid transporter family.

It is found in the cell membrane. Its function is as follows. Component of the transport system for branched-chain amino acids (leucine, isoleucine and valine), which is coupled to a proton motive force. The chain is Putative branched-chain amino acid carrier protein SERP0977 from Staphylococcus epidermidis (strain ATCC 35984 / DSM 28319 / BCRC 17069 / CCUG 31568 / BM 3577 / RP62A).